The sequence spans 336 residues: G patch domain and ankyrin repeat-containing protein 1 homolog (336 aa).

2 ANK repeats span residues Phe-123 to Thr-152 and Ser-156 to Thr-185. Residues Ala-240 to Gln-286 form the G-patch domain.

The protein is G patch domain and ankyrin repeat-containing protein 1 homolog of Drosophila melanogaster (Fruit fly).